A 556-amino-acid chain; its full sequence is Acetyl-coenzyme A thioesterase (556 aa).

The HotDog ACOT-type 1 domain occupies 6 to 118; that stretch reads APGEVLMSQA…FSTFVAKPVG (113 aa). At Lys-34 the chain carries N6-succinyllysine. Residues 54-56 and 83-85 contribute to the CoA site; these read TAS and STS. Lys-97 carries the post-translational modification N6-succinyllysine. Arg-145 is a CoA binding site. An N6-succinyllysine mark is found at Lys-160 and Lys-229. The 116-residue stretch at 180–295 folds into the HotDog ACOT-type 2 domain; sequence MGTSVQSIEL…FLIYNAVDDQ (116 aa). Position 235–237 (235–237) interacts with CoA; sequence KFR. An START domain is found at 327 to 536; that stretch reads GRKYVISHKK…GGWSKSIEEA (210 aa).

As to quaternary structure, homodimer or homotetramer.

The protein resides in the cytoplasm. Its subcellular location is the cytosol. The catalysed reaction is acetyl-CoA + H2O = acetate + CoA + H(+). The enzyme catalyses butanoyl-CoA + H2O = butanoate + CoA + H(+). It catalyses the reaction hexanoyl-CoA + H2O = hexanoate + CoA + H(+). Its pathway is lipid metabolism; fatty acid metabolism. Its activity is regulated as follows. Allosterically regulated by ATP (activator) and ADP (inhibitor). Cold labile, it dissociates into inactive monomers at low temperature. Functionally, catalyzes the hydrolysis of acyl-CoAs into free fatty acids and coenzyme A (CoASH), regulating their respective intracellular levels. Preferentially hydrolyzes acetyl-CoA. This is Acetyl-coenzyme A thioesterase (Acot12) from Mus musculus (Mouse).